Reading from the N-terminus, the 273-residue chain is ATP synthase subunit delta (273 aa).

Belongs to the ATPase delta chain family. As to quaternary structure, F-type ATPases have 2 components, F(1) - the catalytic core - and F(0) - the membrane proton channel. F(1) has five subunits: alpha(3), beta(3), gamma(1), delta(1), epsilon(1). F(0) has three main subunits: a(1), b(2) and c(10-14). The alpha and beta chains form an alternating ring which encloses part of the gamma chain. F(1) is attached to F(0) by a central stalk formed by the gamma and epsilon chains, while a peripheral stalk is formed by the delta and b chains.

It localises to the cell membrane. Functionally, f(1)F(0) ATP synthase produces ATP from ADP in the presence of a proton or sodium gradient. F-type ATPases consist of two structural domains, F(1) containing the extramembraneous catalytic core and F(0) containing the membrane proton channel, linked together by a central stalk and a peripheral stalk. During catalysis, ATP synthesis in the catalytic domain of F(1) is coupled via a rotary mechanism of the central stalk subunits to proton translocation. Its function is as follows. This protein is part of the stalk that links CF(0) to CF(1). It either transmits conformational changes from CF(0) to CF(1) or is implicated in proton conduction. This Streptomyces avermitilis (strain ATCC 31267 / DSM 46492 / JCM 5070 / NBRC 14893 / NCIMB 12804 / NRRL 8165 / MA-4680) protein is ATP synthase subunit delta.